Reading from the N-terminus, the 293-residue chain is NAD kinase (293 aa).

Aspartate 72 (proton acceptor) is an active-site residue. Residues 72–73 (DG), 146–147 (ND), arginine 157, arginine 174, aspartate 176, 187–192 (TAYALS), and glutamine 247 each bind NAD(+).

This sequence belongs to the NAD kinase family. A divalent metal cation serves as cofactor.

The protein resides in the cytoplasm. The catalysed reaction is NAD(+) + ATP = ADP + NADP(+) + H(+). Involved in the regulation of the intracellular balance of NAD and NADP, and is a key enzyme in the biosynthesis of NADP. Catalyzes specifically the phosphorylation on 2'-hydroxyl of the adenosine moiety of NAD to yield NADP. This is NAD kinase from Chromohalobacter salexigens (strain ATCC BAA-138 / DSM 3043 / CIP 106854 / NCIMB 13768 / 1H11).